The primary structure comprises 545 residues: Calcium-dependent protein kinase 10 (545 aa).

The tract at residues 1 to 36 (MGNCNACVRPDSKESKPSSKPKKPNRDRKLNPFAGD) is disordered. Glycine 2 is lipidated: N-myristoyl glycine. The region spanning 63 to 321 (YILGRELGRG…AQQVLAHPWI (259 aa)) is the Protein kinase domain. Residues 69-77 (LGRGEFGIT) and lysine 92 each bind ATP. The Proton acceptor role is filled by aspartate 187. Phosphoserine is present on serine 227. Residues 327–357 (APNVPLGDIVRSRLKQFSMMNRFKKKVLRVI) form an autoinhibitory domain region. 4 EF-hand domains span residues 364–399 (QEVE…VGSQ), 400–435 (LGEP…LQKI), 436–471 (ENDE…ELGE), and 472–507 (PDAS…GTDW). 19 residues coordinate Ca(2+): aspartate 377, aspartate 379, aspartate 381, lysine 383, glutamate 388, aspartate 413, aspartate 415, asparagine 417, glutamate 424, aspartate 449, aspartate 451, serine 453, tyrosine 455, glutamate 460, aspartate 485, aspartate 487, aspartate 489, arginine 491, and glutamate 496.

It belongs to the protein kinase superfamily. Ser/Thr protein kinase family. CDPK subfamily.

It localises to the membrane. The catalysed reaction is L-seryl-[protein] + ATP = O-phospho-L-seryl-[protein] + ADP + H(+). It carries out the reaction L-threonyl-[protein] + ATP = O-phospho-L-threonyl-[protein] + ADP + H(+). With respect to regulation, activated by calcium. Autophosphorylation may play an important role in the regulation of the kinase activity. May play a role in signal transduction pathways that involve calcium as a second messenger. May be a positive regulator controlling stress signal transduction. The polypeptide is Calcium-dependent protein kinase 10 (CPK10) (Arabidopsis thaliana (Mouse-ear cress)).